The primary structure comprises 447 residues: tRNA-2-methylthio-N(6)-dimethylallyladenosine synthase (447 aa).

Residues 14 to 130 (KKVYIRTFGC…LPAMIANAGQ (117 aa)) enclose the MTTase N-terminal domain. 6 residues coordinate [4Fe-4S] cluster: Cys23, Cys59, Cys93, Cys166, Cys170, and Cys173. Positions 152 to 382 (RSGTISAFIP…IALQGSISGE (231 aa)) constitute a Radical SAM core domain. One can recognise a TRAM domain in the interval 385–447 (AAEVGAVVEV…TPATLIGTPA (63 aa)).

This sequence belongs to the methylthiotransferase family. MiaB subfamily. Monomer. It depends on [4Fe-4S] cluster as a cofactor.

Its subcellular location is the cytoplasm. The enzyme catalyses N(6)-dimethylallyladenosine(37) in tRNA + (sulfur carrier)-SH + AH2 + 2 S-adenosyl-L-methionine = 2-methylsulfanyl-N(6)-dimethylallyladenosine(37) in tRNA + (sulfur carrier)-H + 5'-deoxyadenosine + L-methionine + A + S-adenosyl-L-homocysteine + 2 H(+). Its function is as follows. Catalyzes the methylthiolation of N6-(dimethylallyl)adenosine (i(6)A), leading to the formation of 2-methylthio-N6-(dimethylallyl)adenosine (ms(2)i(6)A) at position 37 in tRNAs that read codons beginning with uridine. This chain is tRNA-2-methylthio-N(6)-dimethylallyladenosine synthase, found in Chlorobium phaeobacteroides (strain BS1).